We begin with the raw amino-acid sequence, 142 residues long: Large ribosomal subunit protein uL11 (142 aa).

The protein belongs to the universal ribosomal protein uL11 family. As to quaternary structure, part of the ribosomal stalk of the 50S ribosomal subunit. Interacts with L10 and the large rRNA to form the base of the stalk. L10 forms an elongated spine to which L12 dimers bind in a sequential fashion forming a multimeric L10(L12)X complex. Post-translationally, one or more lysine residues are methylated.

In terms of biological role, forms part of the ribosomal stalk which helps the ribosome interact with GTP-bound translation factors. This chain is Large ribosomal subunit protein uL11, found in Akkermansia muciniphila (strain ATCC BAA-835 / DSM 22959 / JCM 33894 / BCRC 81048 / CCUG 64013 / CIP 107961 / Muc).